We begin with the raw amino-acid sequence, 171 residues long: CASP-like protein 1C3 (171 aa).

Topologically, residues 1–6 (MVKPKR) are cytoplasmic. A helical membrane pass occupies residues 7–27 (LLSLLLRLIAFGATLAAVIIM). Over 28-52 (ATSHEKGSFFALSYEAKYSDTPAFK) the chain is Extracellular. A helical transmembrane segment spans residues 53-73 (YFVIANAIVTVYGFLALFIPS). Topologically, residues 74–79 (ESPLWR) are cytoplasmic. The helical transmembrane segment at 80 to 100 (LVLALDLVFTMLLISSISAAL) threads the bilayer. Residues 101–130 (AVAQVGKKGNSSAGWLPVCGQVTKYCNQVT) lie on the Extracellular side of the membrane. An N-linked (GlcNAc...) asparagine glycan is attached at Asn110. The helical transmembrane segment at 131–151 (GALVAGFIAIITYIILLLYSI) threads the bilayer. Topologically, residues 152-171 (YTFLNSLLGKTPCRLSSPGI) are cytoplasmic.

Belongs to the Casparian strip membrane proteins (CASP) family. Homodimer and heterodimers.

It localises to the cell membrane. The protein is CASP-like protein 1C3 of Populus trichocarpa (Western balsam poplar).